A 596-amino-acid chain; its full sequence is Pentatricopeptide repeat-containing protein At1g50270 (596 aa).

PPR repeat units lie at residues Ser66–Pro102, Ser103–Ser136, Asp137–Lys167, Asp168–Ala202, Asn203–Lys237, Asp239–Arg269, Asn270–Pro304, Asn305–Ile339, Asn340–Lys370, Asn371–Pro405, Asn406–Arg436, and Lys442–Glu472. The segment at Val477 to Lys552 is type E motif. Positions Gly553–Arg584 are type E(+) motif.

Belongs to the PPR family. PCMP-E subfamily.

This chain is Pentatricopeptide repeat-containing protein At1g50270 (PCMP-E42), found in Arabidopsis thaliana (Mouse-ear cress).